The following is a 392-amino-acid chain: Ameloblastin (392 aa).

The signal sequence occupies residues 1 to 26 (MPALKIPLFKMKDMILILCLLKMSSA). A Hydroxyproline modification is found at Pro37. A Phosphoserine modification is found at Ser43. Disordered stretches follow at residues 86 to 109 (FPWM…PGQK), 247 to 280 (TLEF…LADP), and 349 to 392 (TTLG…FQEP). Low complexity predominate over residues 97–109 (QQPSLQPQQPGQK). Residues 359 to 381 (VDSTATPDTQHTLMPRNKAQQPQ) show a composition bias toward polar residues. The segment covering 382–392 (IKHDAWHFQEP) has biased composition (basic and acidic residues).

It belongs to the ameloblastin family.

The protein resides in the secreted. It is found in the extracellular space. It localises to the extracellular matrix. In terms of biological role, involved in the mineralization and structural organization of enamel. The polypeptide is Ameloblastin (AMBN) (Bos taurus (Bovine)).